The chain runs to 130 residues: Small ribosomal subunit protein uS9 (130 aa).

The protein belongs to the universal ribosomal protein uS9 family.

The sequence is that of Small ribosomal subunit protein uS9 from Xanthomonas axonopodis pv. citri (strain 306).